Reading from the N-terminus, the 96-residue chain is Large ribosomal subunit protein eL43 (96 aa).

Residues 39–60 (CTFCGKTATKRTCVGIWKCKKC) form a C4-type zinc finger.

Belongs to the eukaryotic ribosomal protein eL43 family. In terms of assembly, component of the large ribosomal subunit. Mature ribosomes consist of a small (40S) and a large (60S) subunit. The 40S subunit contains about 32 different proteins and 1 molecule of RNA (18S). The 60S subunit contains about 42 different proteins and 3 molecules of RNA (28S, 5.8S and 5S).

Its subcellular location is the cytoplasm. Its function is as follows. Component of the ribosome, a large ribonucleoprotein complex responsible for the synthesis of proteins in the cell. The small ribosomal subunit (SSU) binds messenger RNAs (mRNAs) and translates the encoded message by selecting cognate aminoacyl-transfer RNA (tRNA) molecules. The large subunit (LSU) contains the ribosomal catalytic site termed the peptidyl transferase center (PTC), which catalyzes the formation of peptide bonds, thereby polymerizing the amino acids delivered by tRNAs into a polypeptide chain. The nascent polypeptides leave the ribosome through a tunnel in the LSU and interact with protein factors that function in enzymatic processing, targeting, and the membrane insertion of nascent chains at the exit of the ribosomal tunnel. This is Large ribosomal subunit protein eL43 from Plasmodium falciparum (isolate 3D7).